Here is a 546-residue protein sequence, read N- to C-terminus: Methionine--tRNA ligase (546 aa).

The 'HIGH' region motif lies at 15–25; it reads PYANGPIHLGH. 4 residues coordinate Zn(2+): Cys146, Cys149, Cys159, and Cys162. The 'KMSKS' region signature appears at 332–336; that stretch reads KMSKS. Residue Lys335 participates in ATP binding.

The protein belongs to the class-I aminoacyl-tRNA synthetase family. MetG type 1 subfamily. As to quaternary structure, monomer. Zn(2+) is required as a cofactor.

The protein localises to the cytoplasm. The catalysed reaction is tRNA(Met) + L-methionine + ATP = L-methionyl-tRNA(Met) + AMP + diphosphate. Its function is as follows. Is required not only for elongation of protein synthesis but also for the initiation of all mRNA translation through initiator tRNA(fMet) aminoacylation. In Coxiella burnetii (strain Dugway 5J108-111), this protein is Methionine--tRNA ligase.